A 285-amino-acid chain; its full sequence is Probable endonuclease 4 (285 aa).

Zn(2+)-binding residues include H67, H107, E144, D178, H181, H215, D228, H230, and E260.

The protein belongs to the AP endonuclease 2 family. It depends on Zn(2+) as a cofactor.

The catalysed reaction is Endonucleolytic cleavage to 5'-phosphooligonucleotide end-products.. Endonuclease IV plays a role in DNA repair. It cleaves phosphodiester bonds at apurinic or apyrimidinic (AP) sites, generating a 3'-hydroxyl group and a 5'-terminal sugar phosphate. The sequence is that of Probable endonuclease 4 from Chloroflexus aurantiacus (strain ATCC 29366 / DSM 635 / J-10-fl).